A 605-amino-acid polypeptide reads, in one-letter code: Arginyl-tRNA--protein transferase 2 (605 aa).

The segment covering 496 to 513 has biased composition (low complexity); it reads KVSSSSSSPQASETLLES. The disordered stretch occupies residues 496–549; the sequence is KVSSSSSSPQASETLLESTSEHEDMEQGDTNDDDDEMYNSDEDSDSDSSSSRNR. Positions 518–541 are enriched in acidic residues; the sequence is EDMEQGDTNDDDDEMYNSDEDSDS.

The protein belongs to the R-transferase family.

The enzyme catalyses an N-terminal L-alpha-aminoacyl-[protein] + L-arginyl-tRNA(Arg) = an N-terminal L-arginyl-L-aminoacyl-[protein] + tRNA(Arg) + H(+). Involved in the post-translational conjugation of arginine to the N-terminal aspartate or glutamate of a protein. This arginylation is required for degradation of the protein via the ubiquitin pathway. Component of the N-end rule pathway with ATE1 and PRT6. The N-end rule pathway regulates seed after-ripening, seedling sugar sensitivity, seedling lipid breakdown, and abscisic acid (ABA) sensitivity of germination. The end-rule pathway regulates various aspects of leaf and shoot development. Involved in the oxygen-dependent N-arginylation of RAP2-12, an activator of hypoxic gene expression. This N-terminal modification leads to ubiquitination by PRT6 and subsequent degradation of RAP2-12 under aerobic conditions. Involved in disease resistance. The end-rule pathway plays a role in regulating the timing and amplitude of the immune response following infection with the bacterial pathogen Pseudomonas syringae pv tomato. Regulates the biosynthesis of plant-defense metabolites such as glucosinolates, and the biosynthesis and response to the phytohormone jasmonate (JA), which plays a key role in plant immunity. This is Arginyl-tRNA--protein transferase 2 from Arabidopsis thaliana (Mouse-ear cress).